We begin with the raw amino-acid sequence, 512 residues long: Cytochrome P450 76C1 (512 aa).

Residues 3 to 23 traverse the membrane as a helical segment; it reads IISGQALLLLFCFILSCFLIF. Residue cysteine 450 participates in heme binding.

Belongs to the cytochrome P450 family. Heme is required as a cofactor.

It localises to the membrane. This Arabidopsis thaliana (Mouse-ear cress) protein is Cytochrome P450 76C1 (CYP76C1).